The following is a 324-amino-acid chain: NADH-ubiquinone oxidoreductase chain 1 (324 aa).

A run of 8 helical transmembrane segments spans residues 5–25, 75–95, 106–126, 146–166, 177–197, 228–248, 259–279, and 299–319; these read ILLY…ATAF, FLFL…WMPL, LGLL…LGSG, ISYE…TGGF, TVWL…STLA, LFFL…VILF, QIST…FLWI, and FLPL…ATAS.

This sequence belongs to the complex I subunit 1 family.

The protein resides in the mitochondrion inner membrane. It carries out the reaction a ubiquinone + NADH + 5 H(+)(in) = a ubiquinol + NAD(+) + 4 H(+)(out). Functionally, core subunit of the mitochondrial membrane respiratory chain NADH dehydrogenase (Complex I) that is believed to belong to the minimal assembly required for catalysis. Complex I functions in the transfer of electrons from NADH to the respiratory chain. The immediate electron acceptor for the enzyme is believed to be ubiquinone. This Squalus acanthias (Spiny dogfish) protein is NADH-ubiquinone oxidoreductase chain 1 (MT-ND1).